The following is a 436-amino-acid chain: tRNA-2-methylthio-N(6)-dimethylallyladenosine synthase (436 aa).

Residues 5 to 121 (RKLFIKTYGC…LPDMLDRTEG (117 aa)) enclose the MTTase N-terminal domain. [4Fe-4S] cluster-binding residues include Cys14, Cys50, Cys84, Cys158, Cys162, and Cys165. The region spanning 144–374 (ATRGPAAFLT…TEQQRAAQMA (231 aa)) is the Radical SAM core domain. Positions 373 to 435 (MAMVGREVGV…PNSLAGERLG (63 aa)) constitute a TRAM domain.

The protein belongs to the methylthiotransferase family. MiaB subfamily. In terms of assembly, monomer. [4Fe-4S] cluster serves as cofactor.

The protein localises to the cytoplasm. The catalysed reaction is N(6)-dimethylallyladenosine(37) in tRNA + (sulfur carrier)-SH + AH2 + 2 S-adenosyl-L-methionine = 2-methylsulfanyl-N(6)-dimethylallyladenosine(37) in tRNA + (sulfur carrier)-H + 5'-deoxyadenosine + L-methionine + A + S-adenosyl-L-homocysteine + 2 H(+). In terms of biological role, catalyzes the methylthiolation of N6-(dimethylallyl)adenosine (i(6)A), leading to the formation of 2-methylthio-N6-(dimethylallyl)adenosine (ms(2)i(6)A) at position 37 in tRNAs that read codons beginning with uridine. The polypeptide is tRNA-2-methylthio-N(6)-dimethylallyladenosine synthase (Cereibacter sphaeroides (strain ATCC 17029 / ATH 2.4.9) (Rhodobacter sphaeroides)).